The primary structure comprises 291 residues: Probable peptide ABC transporter permease protein y4tQ (291 aa).

5 helical membrane-spanning segments follow: residues 28-48, 92-112, 137-157, 213-233, and 249-269; these read LVLL…AAPL, LIVG…IGVI, LLAI…IVAI, ATVC…GVGV, and LFLA…AVTV. An ABC transmembrane type-1 domain is found at 88–276; sequence ARISLIVGLL…VTVLAVNLLG (189 aa).

The protein belongs to the binding-protein-dependent transport system permease family. OppBC subfamily.

The protein localises to the cell inner membrane. In terms of biological role, probably part of the binding-protein-dependent transport system y4tOPQRS for a peptide. Probably responsible for the translocation of the substrate across the membrane. This is Probable peptide ABC transporter permease protein y4tQ from Sinorhizobium fredii (strain NBRC 101917 / NGR234).